A 278-amino-acid polypeptide reads, in one-letter code: Tetraspanin-13 (278 aa).

At 1-25 the chain is on the cytoplasmic side; it reads MARDKEDQNNENPSIVQNMSFPFNT. A helical transmembrane segment spans residues 26-46; it reads IFLISSAIFLVTAAFWFVAVM. Residues 47 to 62 lie on the Extracellular side of the membrane; sequence TLHYRTDECNRFVTTP. Residues 63–83 traverse the membrane as a helical segment; the sequence is GIFISFSLLAMSLTGFYAAYF. The Cytoplasmic segment spans residues 84–92; sequence KSDCLFRIH. Residues 93–113 form a helical membrane-spanning segment; that stretch reads FFIFFLWMFVVVSKAIFVIFL. Over 114–249 the chain is Extracellular; sequence HKETNPRLFP…DVHNTSFSIT (136 aa). Residues N202, N220, and N243 are each glycosylated (N-linked (GlcNAc...) asparagine). Residues 250 to 270 form a helical membrane-spanning segment; the sequence is VNIIHIIFSLCIGMTGWFAWL. The Cytoplasmic segment spans residues 271 to 278; sequence RILRESQK.

This sequence belongs to the tetraspanin (TM4SF) family.

The protein resides in the membrane. Functionally, may be involved in the regulation of cell differentiation. The polypeptide is Tetraspanin-13 (TET13) (Arabidopsis thaliana (Mouse-ear cress)).